The following is a 522-amino-acid chain: Target of rapamycin complex 2 subunit MAPKAP1 (522 aa).

N-acetylalanine is present on A2. The interval 2-184 (AFLDNPTIIL…KKIDVYLPLH (183 aa)) is interaction with MAP3K2. The segment at 2–267 (AFLDNPTIIL…GFSTLALVEK (266 aa)) is interaction with NBN. T86 is modified (phosphothreonine). S128, S186, S315, and S356 each carry phosphoserine. A CRIM domain is found at 139–267 (QSILSVRLEQ…GFSTLALVEK (129 aa)). Positions 279–353 (LFVRINAAHG…QSAWEFCLVR (75 aa)) are SIN1-type RBD. In terms of domain architecture, SIN1-type PH spans 382–487 (HYKSFKVSMI…IVLKVNYILE (106 aa)). R393 serves as a coordination point for a 1,2-diacyl-sn-glycero-3-phospho-(1D-myo-inositol-3,4,5-trisphosphate). Position 398 is a phosphothreonine (T398). Positions 428 and 464 each coordinate a 1,2-diacyl-sn-glycero-3-phospho-(1D-myo-inositol-3,4,5-trisphosphate). The tract at residues 468 to 522 (FESDAATVNEIVLKVNYILESRASTARADYFAQKQRKLNRRTSFSFQKEKKSGQQ) is interaction with ATF2. A Phosphoserine modification is found at S510.

Belongs to the SIN1 family. In terms of assembly, component of the mechanistic target of rapamycin complex 2 (mTORC2), consisting in two heterotretramers composed of MTOR, MLST8, RICTOR and MAPKAP1/SIN1. The mTORC2 core complex associates with PRR5/PROTOR1 and/or PRR5L/PROTOR2. Contrary to mTORC1, mTORC2 does not bind to and is not sensitive to FKBP12-rapamycin. Interacts with MAP3K2. Interacts with ATF2. Interacts with MAPK8. Interacts with GTP-bound HRAS and KRAS; inhibiting their activity. Interacts with IFNAR2. As to quaternary structure, interacts with CCDC28B. Interacts with NBN. In terms of processing, phosphorylation at Ser-128 by PKC promotes relocalization to the perinuclear region, where the mTORC2 complex specifically mediates phosphorylation of SGK1. Phosphorylated at Thr-86 by AKT1 or RPS6KB1 in the presence of growth factors; the effect of this phosphorylation is however unclear. According to two studies, phosphorylation at Thr-86 by AKT1 is part of a positive feedback loop that increases mTORC2 activation. According to another study, phosphorylation at Thr-86 and Thr-398 by RPS6KB1 promotes dissociation from the mTORC2 complex, leading to inhibit mTORC2 signaling. As to expression, ubiquitously expressed, with highest levels in heart and skeletal muscle.

It localises to the cell membrane. It is found in the endoplasmic reticulum membrane. Its subcellular location is the early endosome membrane. The protein resides in the late endosome membrane. The protein localises to the lysosome membrane. It localises to the golgi apparatus membrane. It is found in the mitochondrion outer membrane. Its subcellular location is the cytoplasm. The protein resides in the perinuclear region. The protein localises to the nucleus. It localises to the cytosol. Phosphatidylinositol 3,4,5-trisphosphate (PI(3,4,5)P3) promotes MTOR activation by relieving MAPKAP1/SIN1-mediated inhibition of MTOR that takes place in absence of PI(3,4,5)P3. Functionally, component of the mechanistic target of rapamycin complex 2 (mTORC2), which transduces signals from growth factors to pathways involved in proliferation, cytoskeletal organization, lipogenesis and anabolic output. In response to growth factors, mTORC2 phosphorylates and activates AGC protein kinase family members, including AKT (AKT1, AKT2 and AKT3), PKC (PRKCA, PRKCB and PRKCE) and SGK1. In contrast to mTORC1, mTORC2 is nutrient-insensitive. Within the mTORC2 complex, MAPKAP1/SIN1 acts as a substrate adapter which recognizes and binds AGC protein kinase family members for phosphorylation by MTOR. mTORC2 plays a critical role in AKT1 activation by mediating phosphorylation of different sites depending on the context, such as 'Thr-450', 'Ser-473', 'Ser-477' or 'Thr-479', facilitating the phosphorylation of the activation loop of AKT1 on 'Thr-308' by PDPK1/PDK1 which is a prerequisite for full activation. mTORC2 catalyzes the phosphorylation of SGK1 at 'Ser-422' and of PRKCA on 'Ser-657'. The mTORC2 complex also phosphorylates various proteins involved in insulin signaling, such as FBXW8 and IGF2BP1. mTORC2 acts upstream of Rho GTPases to regulate the actin cytoskeleton, probably by activating one or more Rho-type guanine nucleotide exchange factors. mTORC2 promotes the serum-induced formation of stress-fibers or F-actin. MAPKAP1 inhibits MAP3K2 by preventing its dimerization and autophosphorylation. Inhibits HRAS and KRAS independently of mTORC2 complex. Enhances osmotic stress-induced phosphorylation of ATF2 and ATF2-mediated transcription. Involved in ciliogenesis, regulates cilia length through its interaction with CCDC28B independently of mTORC2 complex. In contrast to isoform 1, isoform 2 and isoform 6, isoform 4 is not a component of the a mTORC2 complex. The sequence is that of Target of rapamycin complex 2 subunit MAPKAP1 from Homo sapiens (Human).